A 182-amino-acid chain; its full sequence is Adenine phosphoribosyltransferase (182 aa).

The protein belongs to the purine/pyrimidine phosphoribosyltransferase family. In terms of assembly, homodimer.

It is found in the cytoplasm. The enzyme catalyses AMP + diphosphate = 5-phospho-alpha-D-ribose 1-diphosphate + adenine. Its pathway is purine metabolism; AMP biosynthesis via salvage pathway; AMP from adenine: step 1/1. Catalyzes a salvage reaction resulting in the formation of AMP, that is energically less costly than de novo synthesis. This Campylobacter jejuni subsp. jejuni serotype O:23/36 (strain 81-176) protein is Adenine phosphoribosyltransferase.